Here is a 153-residue protein sequence, read N- to C-terminus: Ubiquitin-conjugating enzyme E2 13 (153 aa).

The 147-residue stretch at 3-149 (SLPKRIIKET…AREWTKLYAK (147 aa)) folds into the UBC core domain. The active-site Glycyl thioester intermediate is cysteine 87. Residue lysine 92 forms a Glycyl lysine isopeptide (Lys-Gly) (interchain with G-Cter in ubiquitin) linkage.

The protein belongs to the ubiquitin-conjugating enzyme family. Heterodimer with MMS2.

It catalyses the reaction S-ubiquitinyl-[E1 ubiquitin-activating enzyme]-L-cysteine + [E2 ubiquitin-conjugating enzyme]-L-cysteine = [E1 ubiquitin-activating enzyme]-L-cysteine + S-ubiquitinyl-[E2 ubiquitin-conjugating enzyme]-L-cysteine.. It participates in protein modification; protein ubiquitination. Functionally, has a role in the DNA error-free postreplication repair (PRR) pathway. The UBC13/MMS2 heterodimer catalyzes the synthesis of non-canonical poly-ubiquitin chains that are linked through 'Lys-63'. This is Ubiquitin-conjugating enzyme E2 13 (UBC13) from Saccharomyces cerevisiae (strain ATCC 204508 / S288c) (Baker's yeast).